Here is a 98-residue protein sequence, read N- to C-terminus: NADH-ubiquinone oxidoreductase chain 4L (98 aa).

A run of 3 helical transmembrane segments spans residues 1-21 (MSMV…GLLM), 29-49 (SLLC…ATIL), and 61-81 (IILL…LVTV).

It belongs to the complex I subunit 4L family. As to quaternary structure, core subunit of respiratory chain NADH dehydrogenase (Complex I) which is composed of 45 different subunits.

It is found in the mitochondrion inner membrane. The catalysed reaction is a ubiquinone + NADH + 5 H(+)(in) = a ubiquinol + NAD(+) + 4 H(+)(out). Functionally, core subunit of the mitochondrial membrane respiratory chain NADH dehydrogenase (Complex I) which catalyzes electron transfer from NADH through the respiratory chain, using ubiquinone as an electron acceptor. Part of the enzyme membrane arm which is embedded in the lipid bilayer and involved in proton translocation. In Pusa caspica (Caspian seal), this protein is NADH-ubiquinone oxidoreductase chain 4L (MT-ND4L).